Here is a 330-residue protein sequence, read N- to C-terminus: Aspartate--ammonia ligase (330 aa).

It belongs to the class-II aminoacyl-tRNA synthetase family. AsnA subfamily.

The protein resides in the cytoplasm. It catalyses the reaction L-aspartate + NH4(+) + ATP = L-asparagine + AMP + diphosphate + H(+). Its pathway is amino-acid biosynthesis; L-asparagine biosynthesis; L-asparagine from L-aspartate (ammonia route): step 1/1. The polypeptide is Aspartate--ammonia ligase (Salmonella newport (strain SL254)).